The chain runs to 701 residues: Elongation factor G (701 aa).

The region spanning 8-290 is the tr-type G domain; that stretch reads SLYRNIGISA…AVVELLPAPT (283 aa). Residues 17 to 24, 88 to 92, and 142 to 145 each bind GTP; these read AHIDAGKT, DTPGH, and NKMD.

The protein belongs to the TRAFAC class translation factor GTPase superfamily. Classic translation factor GTPase family. EF-G/EF-2 subfamily.

The protein resides in the cytoplasm. Functionally, catalyzes the GTP-dependent ribosomal translocation step during translation elongation. During this step, the ribosome changes from the pre-translocational (PRE) to the post-translocational (POST) state as the newly formed A-site-bound peptidyl-tRNA and P-site-bound deacylated tRNA move to the P and E sites, respectively. Catalyzes the coordinated movement of the two tRNA molecules, the mRNA and conformational changes in the ribosome. The protein is Elongation factor G of Neisseria gonorrhoeae (strain ATCC 700825 / FA 1090).